Consider the following 217-residue polypeptide: Cytidylate kinase (217 aa).

Gly-9–Ser-17 is an ATP binding site.

Belongs to the cytidylate kinase family. Type 1 subfamily.

It localises to the cytoplasm. The enzyme catalyses CMP + ATP = CDP + ADP. It carries out the reaction dCMP + ATP = dCDP + ADP. This chain is Cytidylate kinase, found in Mycoplasma pneumoniae (strain ATCC 29342 / M129 / Subtype 1) (Mycoplasmoides pneumoniae).